The chain runs to 142 residues: SsrA-binding protein (142 aa).

It belongs to the SmpB family.

The protein localises to the cytoplasm. Functionally, required for rescue of stalled ribosomes mediated by trans-translation. Binds to transfer-messenger RNA (tmRNA), required for stable association of tmRNA with ribosomes. tmRNA and SmpB together mimic tRNA shape, replacing the anticodon stem-loop with SmpB. tmRNA is encoded by the ssrA gene; the 2 termini fold to resemble tRNA(Ala) and it encodes a 'tag peptide', a short internal open reading frame. During trans-translation Ala-aminoacylated tmRNA acts like a tRNA, entering the A-site of stalled ribosomes, displacing the stalled mRNA. The ribosome then switches to translate the ORF on the tmRNA; the nascent peptide is terminated with the 'tag peptide' encoded by the tmRNA and targeted for degradation. The ribosome is freed to recommence translation, which seems to be the essential function of trans-translation. In Mycoplasma mobile (strain ATCC 43663 / 163K / NCTC 11711) (Mesomycoplasma mobile), this protein is SsrA-binding protein.